Reading from the N-terminus, the 242-residue chain is Large ribosomal subunit protein uL1 (242 aa).

It belongs to the universal ribosomal protein uL1 family. As to quaternary structure, part of the 50S ribosomal subunit.

Functionally, binds directly to 23S rRNA. The L1 stalk is quite mobile in the ribosome, and is involved in E site tRNA release. In terms of biological role, protein L1 is also a translational repressor protein, it controls the translation of the L11 operon by binding to its mRNA. This is Large ribosomal subunit protein uL1 from Persephonella marina (strain DSM 14350 / EX-H1).